Consider the following 185-residue polypeptide: Large ribosomal subunit protein uL15 (185 aa).

Residues 1-51 form a disordered region; it reads MDLSSLRPAAGAVKNKKRVGRGQGSGNGTTAGKGNKGQQARSGYQKPINEG. Positions 21–35 are enriched in gly residues; it reads RGQGSGNGTTAGKGN.

This sequence belongs to the universal ribosomal protein uL15 family. Part of the 50S ribosomal subunit.

In terms of biological role, binds to the 23S rRNA. The polypeptide is Large ribosomal subunit protein uL15 (Chlorobium phaeobacteroides (strain DSM 266 / SMG 266 / 2430)).